The sequence spans 156 residues: Small ribosomal subunit protein uS7 (156 aa).

The protein belongs to the universal ribosomal protein uS7 family. As to quaternary structure, part of the 30S ribosomal subunit. Contacts proteins S9 and S11.

Its function is as follows. One of the primary rRNA binding proteins, it binds directly to 16S rRNA where it nucleates assembly of the head domain of the 30S subunit. Is located at the subunit interface close to the decoding center, probably blocks exit of the E-site tRNA. This chain is Small ribosomal subunit protein uS7, found in Buchnera aphidicola subsp. Baizongia pistaciae (strain Bp).